The chain runs to 102 residues: Salivary thrombin inhibitor anophelin (102 aa).

Positions 1–21 (MATKLIVIAFLCAALIAVVQS) are cleaved as a signal peptide. The interval 25–102 (YAQGEEPTYD…SDSSSESTEH (78 aa)) is disordered. Over residues 59–69 (SQLTEYANTAQ) the composition is skewed to polar residues. Positions 70–73 (DPGR) are blocks active site cleft of host thrombin in a reverse direction compared to substrates. Over residues 80 to 90 (QANSNNGDQLP) the composition is skewed to polar residues. Low complexity predominate over residues 91–102 (SQSDSSSESTEH).

It belongs to the anophelin family. In terms of assembly, interacts with human F2 (thrombin); the interaction results in thrombin inhibition.

It is found in the secreted. Its function is as follows. Salivary protein with anticoagulant activity that inhibits host thrombin (F2). In Anopheles funestus (African malaria mosquito), this protein is Salivary thrombin inhibitor anophelin.